Reading from the N-terminus, the 199-residue chain is Transgelin-2 (199 aa).

A2 carries the N-acetylalanine modification. S11 carries the post-translational modification Phosphoserine. K17 and K20 each carry N6-acetyllysine. In terms of domain architecture, Calponin-homology (CH) spans 24–136 (ADLEQILIQW…RTLMNLGGLA (113 aa)). S163 is subject to Phosphoserine. A Glycyl lysine isopeptide (Lys-Gly) (interchain with G-Cter in SUMO2) cross-link involves residue K171. The Calponin-like repeat unit spans residues 174 to 199 (IGLQMGTNRGASQAGMTGYGMPRQIL). The residue at position 180 (T180) is a Phosphothreonine. Omega-N-methylarginine occurs at positions 182 and 196.

Belongs to the calponin family. As to expression, expressed in epididymis (at protein level).

This is Transgelin-2 (TAGLN2) from Homo sapiens (Human).